The sequence spans 275 residues: 3-methyl-2-oxobutanoate hydroxymethyltransferase (275 aa).

The Mg(2+) site is built by Asp44 and Asp83. 3-methyl-2-oxobutanoate is bound by residues 44–45, Asp83, and Lys113; that span reads DS. Glu115 is a binding site for Mg(2+). Residue Glu182 is the Proton acceptor of the active site.

Belongs to the PanB family. As to quaternary structure, homodecamer; pentamer of dimers. Mg(2+) serves as cofactor.

Its subcellular location is the cytoplasm. The catalysed reaction is 3-methyl-2-oxobutanoate + (6R)-5,10-methylene-5,6,7,8-tetrahydrofolate + H2O = 2-dehydropantoate + (6S)-5,6,7,8-tetrahydrofolate. The protein operates within cofactor biosynthesis; (R)-pantothenate biosynthesis; (R)-pantoate from 3-methyl-2-oxobutanoate: step 1/2. Functionally, catalyzes the reversible reaction in which hydroxymethyl group from 5,10-methylenetetrahydrofolate is transferred onto alpha-ketoisovalerate to form ketopantoate. This is 3-methyl-2-oxobutanoate hydroxymethyltransferase from Clostridium botulinum (strain Loch Maree / Type A3).